A 245-amino-acid polypeptide reads, in one-letter code: MKFGKRIKEQIQESLPEWRDKFLRYKELKNLISSPAPVESIFVGLLNAEIDKFNAFFVEQEEDFIIHHKELQYRIQRLVEKCGHNDEMSRENISEIRKDIVNFHGEMVLLVNYSNINYTGLAKILKKYDKRTRGGLRSPFIQKVLHQPFFKTDLVSRLVREWETTMDAVDPVKVAEAEGYERCAAVTSAAAGEGIFRNTVAALLTMKEMRRGSSTYSAFSLPPLNISDSDNVLRSLHLSSPIPIP.

The 142-residue stretch at 1-142 (MKFGKRIKEQ…RGGLRSPFIQ (142 aa)) folds into the SPX domain.

In terms of biological role, plays a positive role in plant adaptation to phosphate starvation and exerts negative feedback regulation of SPX1. This chain is SPX domain-containing protein 3 (SPX3), found in Arabidopsis thaliana (Mouse-ear cress).